Consider the following 461-residue polypeptide: ATP-dependent protease ATPase subunit HslU (461 aa).

ATP contacts are provided by residues V21, G63–E68, D274, E339, and R411.

The protein belongs to the ClpX chaperone family. HslU subfamily. A double ring-shaped homohexamer of HslV is capped on each side by a ring-shaped HslU homohexamer. The assembly of the HslU/HslV complex is dependent on binding of ATP.

It is found in the cytoplasm. Its function is as follows. ATPase subunit of a proteasome-like degradation complex; this subunit has chaperone activity. The binding of ATP and its subsequent hydrolysis by HslU are essential for unfolding of protein substrates subsequently hydrolyzed by HslV. HslU recognizes the N-terminal part of its protein substrates and unfolds these before they are guided to HslV for hydrolysis. This chain is ATP-dependent protease ATPase subunit HslU, found in Caldanaerobacter subterraneus subsp. tengcongensis (strain DSM 15242 / JCM 11007 / NBRC 100824 / MB4) (Thermoanaerobacter tengcongensis).